A 449-amino-acid polypeptide reads, in one-letter code: Probable hexaprenyl pyrophosphate synthase, mitochondrial (449 aa).

3 residues coordinate isopentenyl diphosphate: K122, R125, and H200. Residues D207 and D211 each coordinate Mg(2+). R216 serves as a coordination point for an all-trans-polyprenyl diphosphate. R217 is an isopentenyl diphosphate binding site. An all-trans-polyprenyl diphosphate is bound by residues K300, T301, Q338, and K355.

It belongs to the FPP/GGPP synthase family. The cofactor is Mg(2+).

The protein localises to the mitochondrion. It functions in the pathway cofactor biosynthesis; ubiquinone biosynthesis. Its function is as follows. Assembly of polyisoprenoid side chains. The polyprenyl synthase of coenzyme Q biosynthesis catalyzes the formation from isopentenyl diphosphate of all trans-polyprenyl pyrophosphates generally ranging in length of between 6 and 10 isoprene units depending on the species. The polypeptide is Probable hexaprenyl pyrophosphate synthase, mitochondrial (Neurospora crassa (strain ATCC 24698 / 74-OR23-1A / CBS 708.71 / DSM 1257 / FGSC 987)).